A 50-amino-acid chain; its full sequence is Photosystem II reaction center protein K (50 aa).

Residues 1 to 13 (MLNLNFTNITVMG) constitute a propeptide that is removed on maturation. A helical transmembrane segment spans residues 25 to 45 (IVDILPIIPILFFLLAFVWQA).

This sequence belongs to the PsbK family. In terms of assembly, PSII is composed of 1 copy each of membrane proteins PsbA, PsbB, PsbC, PsbD, PsbE, PsbF, PsbH, PsbI, PsbJ, PsbK, PsbL, PsbM, PsbT, PsbY, PsbZ, Psb30/Ycf12, at least 3 peripheral proteins of the oxygen-evolving complex and a large number of cofactors. It forms dimeric complexes.

It localises to the plastid. Its subcellular location is the chloroplast thylakoid membrane. In terms of biological role, one of the components of the core complex of photosystem II (PSII). PSII is a light-driven water:plastoquinone oxidoreductase that uses light energy to abstract electrons from H(2)O, generating O(2) and a proton gradient subsequently used for ATP formation. It consists of a core antenna complex that captures photons, and an electron transfer chain that converts photonic excitation into a charge separation. In Euglena myxocylindracea, this protein is Photosystem II reaction center protein K.